We begin with the raw amino-acid sequence, 183 residues long: Adenine phosphoribosyltransferase (183 aa).

The protein belongs to the purine/pyrimidine phosphoribosyltransferase family. As to quaternary structure, homodimer.

It localises to the cytoplasm. The enzyme catalyses AMP + diphosphate = 5-phospho-alpha-D-ribose 1-diphosphate + adenine. The protein operates within purine metabolism; AMP biosynthesis via salvage pathway; AMP from adenine: step 1/1. Its function is as follows. Catalyzes a salvage reaction resulting in the formation of AMP, that is energically less costly than de novo synthesis. In Escherichia coli O157:H7, this protein is Adenine phosphoribosyltransferase.